The following is a 595-amino-acid chain: DNA mismatch repair protein MutL (595 aa).

The protein belongs to the DNA mismatch repair MutL/HexB family.

Functionally, this protein is involved in the repair of mismatches in DNA. It is required for dam-dependent methyl-directed DNA mismatch repair. May act as a 'molecular matchmaker', a protein that promotes the formation of a stable complex between two or more DNA-binding proteins in an ATP-dependent manner without itself being part of a final effector complex. The chain is DNA mismatch repair protein MutL from Rhodopseudomonas palustris (strain TIE-1).